Reading from the N-terminus, the 366-residue chain is Glucan organizing enzyme 1 (366 aa).

The Extracellular segment spans residues 1–24; sequence MLPLWARGGKPIVIPLPQKRHITL. Residues 25-45 traverse the membrane as a helical segment; it reads PALPILLLLLGTGFLLHSLFF. The Cytoplasmic portion of the chain corresponds to 46–366; it reads PPPPPHPPGK…ETYKKWKRGH (321 aa).

Belongs to the glycosyltransferase 32 family.

The protein localises to the cell membrane. Its function is as follows. Plays a role in the localization of glycogen rosettes to the plasma membrane. Required for correct cell wall organization and may facilitate the connection between beta-1,3-glucan and beta-1,6-glucan in the cell wall. The protein is Glucan organizing enzyme 1 of Cryptococcus neoformans var. grubii serotype A (strain H99 / ATCC 208821 / CBS 10515 / FGSC 9487) (Filobasidiella neoformans var. grubii).